Consider the following 64-residue polypeptide: Large ribosomal subunit protein bL35 (64 aa).

A compositionally biased stretch (basic residues) spans 1-28 (MSKAKTHSGAAKRFKKTASGYKHKHAFK). The tract at residues 1–51 (MSKAKTHSGAAKRFKKTASGYKHKHAFKSHILTKMTTKRKRQLRGTSLLNA) is disordered.

The protein belongs to the bacterial ribosomal protein bL35 family.

The protein is Large ribosomal subunit protein bL35 of Saccharophagus degradans (strain 2-40 / ATCC 43961 / DSM 17024).